Consider the following 691-residue polypeptide: DNA-directed RNA polymerase subunit beta' (691 aa).

Zn(2+)-binding residues include C69, C71, C87, and C90. Mg(2+)-binding residues include D489, D491, and D493.

It belongs to the RNA polymerase beta' chain family. RpoC1 subfamily. In terms of assembly, in plastids the minimal PEP RNA polymerase catalytic core is composed of four subunits: alpha, beta, beta', and beta''. When a (nuclear-encoded) sigma factor is associated with the core the holoenzyme is formed, which can initiate transcription. Mg(2+) is required as a cofactor. Zn(2+) serves as cofactor.

The protein resides in the plastid. The protein localises to the chloroplast. It carries out the reaction RNA(n) + a ribonucleoside 5'-triphosphate = RNA(n+1) + diphosphate. In terms of biological role, DNA-dependent RNA polymerase catalyzes the transcription of DNA into RNA using the four ribonucleoside triphosphates as substrates. The polypeptide is DNA-directed RNA polymerase subunit beta' (Jasminum nudiflorum (Winter jasmine)).